The primary structure comprises 628 residues: MNEREALRTFGTGENFHAQHYFGFHETEKNGVKGYIFRVWAPNAEDLHLIGDFTGWFDNPLQMDKNEAGVWEVFTDLPKEGHIYKYLVKRQGGQIVEKMDPFAIYLEERPGTGSLIRTIPEKKWKDGLWLGRRKRWGFFKRPVNIYEVHAGSWKQNEDGSPYSFEQLKDELVPYLVKMNYTHVEFMPLMAHPLGMSWGYQLMGFFAFEHTYGTPEQFQDFVEACHLNNIGVIVDWVPGHFTQNDDALAYFDGTPTFEYQDHDRAHNYRWGALNFDLGKNQVQSFLISSAKFWIDFYHIDGIRVDAVSNMLYLDYDEGPWQPNIEGNNRNLEGYYFLQRLNTVLKLAHPDVMMIAEESTATTKITGRREEGGLGFDYKWNMGWMNDILKFYEEDPIYRKYDFNLVTFSFMYLFSENFILPFSHDEVVHGKKSLMHKMWGDRYNQFAGLRNLYTYQICHPGKKLLFMGSEFGQFLEWKYDHALEWTNLEEEDGLNLKMQDFTSQLNQFYKDHKVLWQLDTSYDGLEIIDADNVDESVLSFIRKNEKGDLLVCVFNMVPVERKGFTIGVPVAGIYEEVWNTELEEFGGVWKEHNMTVKTQKNLWKEYENTLSFTLPALGASIWKIKRRLRK.

The Nucleophile role is filled by aspartate 304. Glutamate 355 (proton donor) is an active-site residue.

The protein belongs to the glycosyl hydrolase 13 family. GlgB subfamily. Monomer.

It carries out the reaction Transfers a segment of a (1-&gt;4)-alpha-D-glucan chain to a primary hydroxy group in a similar glucan chain.. It functions in the pathway glycan biosynthesis; glycogen biosynthesis. Its function is as follows. Catalyzes the formation of the alpha-1,6-glucosidic linkages in glycogen by scission of a 1,4-alpha-linked oligosaccharide from growing alpha-1,4-glucan chains and the subsequent attachment of the oligosaccharide to the alpha-1,6 position. The sequence is that of 1,4-alpha-glucan branching enzyme GlgB from Streptococcus mutans serotype c (strain ATCC 700610 / UA159).